The primary structure comprises 290 residues: MRIADYSVTKAVLERHGFTFKKSFGQNFLTDTNILQKIVDTAEIDDQVNVIEIGPGIGALTEFLAERAAQVMAFEIDHRLVPILADTLRDFDNVTVVNEDILKVDLAQHIQNFKNPNLPIKVVANLPYYITTPILMHLIESGIPFCEFVVMMQKEVADRISAQPNTKAYGSLSIAVQYYMTAKVAFIVPRTVFVPAPNVDSAILKMVRRPEPAVAVEDENFFFKVSKASFTHRRKTLWNNLTGYFGKTEEVKDKLTKALDQAGLSPSVRGEALSLAEFAGLADALKGQGL.

Residues N27, L29, G54, E75, D100, and N125 each coordinate S-adenosyl-L-methionine.

This sequence belongs to the class I-like SAM-binding methyltransferase superfamily. rRNA adenine N(6)-methyltransferase family. RsmA subfamily.

Its subcellular location is the cytoplasm. The enzyme catalyses adenosine(1518)/adenosine(1519) in 16S rRNA + 4 S-adenosyl-L-methionine = N(6)-dimethyladenosine(1518)/N(6)-dimethyladenosine(1519) in 16S rRNA + 4 S-adenosyl-L-homocysteine + 4 H(+). Its function is as follows. Specifically dimethylates two adjacent adenosines (A1518 and A1519) in the loop of a conserved hairpin near the 3'-end of 16S rRNA in the 30S particle. May play a critical role in biogenesis of 30S subunits. The protein is Ribosomal RNA small subunit methyltransferase A of Streptococcus pneumoniae (strain 70585).